The primary structure comprises 102 residues: Small ribosomal subunit protein uS10 (102 aa).

Belongs to the universal ribosomal protein uS10 family. In terms of assembly, part of the 30S ribosomal subunit.

Involved in the binding of tRNA to the ribosomes. This chain is Small ribosomal subunit protein uS10, found in Bifidobacterium adolescentis (strain ATCC 15703 / DSM 20083 / NCTC 11814 / E194a).